The following is an 801-amino-acid chain: Palmitoyl thioesterase CPT1C (801 aa).

The Cytoplasmic segment spans residues methionine 1 to aspartate 49. The helical transmembrane segment at phenylalanine 50 to glutamine 70 threads the bilayer. Over leucine 71–glycine 103 the chain is Mitochondrial intermembrane. A helical membrane pass occupies residues leucine 104–valine 124. Residues alanine 125–leucine 801 are Cytoplasmic-facing. Histidine 469 acts as the Proton acceptor in catalysis. CoA is bound at residue glycine 551–aspartate 563. (R)-carnitine-binding residues include tyrosine 585, serine 587, and threonine 598. The interval leucine 760–leucine 801 is required for interaction with GRIA1.

Belongs to the carnitine/choline acetyltransferase family. In terms of assembly, peripherally associated with AMPAR complex. AMPAR complex consists of an inner core made of 4 pore-forming GluA/GRIA proteins (GRIA1, GRIA2, GRIA3 and GRIA4) and 4 major auxiliary subunits arranged in a twofold symmetry. One of the two pairs of distinct binding sites is occupied either by CNIH2, CNIH3 or CACNG2, CACNG3. The other harbors CACNG2, CACNG3, CACNG4, CACNG8 or GSG1L. This inner core of AMPAR complex is complemented by outer core constituents binding directly to the GluA/GRIA proteins at sites distinct from the interaction sites of the inner core constituents. Outer core constituents include at least PRRT1, PRRT2, CKAMP44/SHISA9, FRRS1L and NRN1. The proteins of the inner and outer core serve as a platform for other, more peripherally associated AMPAR constituents, including CPT1C. Alone or in combination, these auxiliary subunits control the gating and pharmacology of the AMPAR complex and profoundly impact their biogenesis and protein processing. Interacts with SACM1L; the interaction regulates SACM1L phosphatidylinositol-3-phosphatase activity and translocation to endoplasmic reticulum/trans Golgi network in a malonyl-CoA dependent manner. Interacts with ATL1. As to expression, expressed in brain (at protein level).

The protein localises to the synapse. It localises to the cell projection. The protein resides in the dendrite. It is found in the axon. Its subcellular location is the endoplasmic reticulum membrane. It carries out the reaction S-hexadecanoyl-L-cysteinyl-[protein] + H2O = L-cysteinyl-[protein] + hexadecanoate + H(+). Palmitoyl thioesterase specifically expressed in the endoplasmic reticulum of neurons. Modulates the trafficking of the glutamate receptor, AMPAR, to plasma membrane through depalmitoylation of GRIA1. Also regulates AMPR trafficking through the regulation of SACM1L phosphatidylinositol-3-phosphatase activity by interaction in a malonyl-CoA dependent manner. Binds malonyl-CoA and couples malonyl-CoA to ceramide levels, necessary for proper spine maturation and contributing to systemic energy homeostasis and appetite control. Binds to palmitoyl-CoA, but does not have carnitine palmitoyltransferase 1 catalytic activity or at very low levels. The polypeptide is Palmitoyl thioesterase CPT1C (Cpt1c) (Rattus norvegicus (Rat)).